Consider the following 327-residue polypeptide: Malate dehydrogenase (327 aa).

12–18 (GAAGQIA) contributes to the NAD(+) binding site. Arg93 and Arg99 together coordinate substrate. NAD(+)-binding positions include Asn106, Gln113, and 130–132 (VGN). Residues Asn132 and Arg163 each contribute to the substrate site. The active-site Proton acceptor is His188.

The protein belongs to the LDH/MDH superfamily. MDH type 2 family.

It catalyses the reaction (S)-malate + NAD(+) = oxaloacetate + NADH + H(+). Functionally, catalyzes the reversible oxidation of malate to oxaloacetate. This chain is Malate dehydrogenase, found in Acidiphilium cryptum (strain JF-5).